Reading from the N-terminus, the 128-residue chain is MAPVKKLVAKGGKKKKQVLKFTLDCTHPVEDRIMDEANSEQFLQERIKVNGKARNLGGGAVTIERSKSKITVTSEVPFSKRYLKYLTKKYLKKNNLHDWLRVVANSKESYELRYFQINQDEEEEEDED.

The residue at position 62 (threonine 62) is a Phosphothreonine. Serine 66 is modified (phosphoserine). Lysine 69 is subject to N6-succinyllysine.

The protein belongs to the eukaryotic ribosomal protein eL22 family. Component of the large ribosomal subunit.

It is found in the cytoplasm. Component of the large ribosomal subunit. The ribosome is a large ribonucleoprotein complex responsible for the synthesis of proteins in the cell. The polypeptide is Large ribosomal subunit protein eL22 (RPL22) (Oryctolagus cuniculus (Rabbit)).